The chain runs to 339 residues: Ribonucleoside-diphosphate reductase subunit beta (339 aa).

2 residues coordinate Fe cation: Asp87 and His121. Tyr125 is a catalytic residue. His215 is a Fe cation binding site.

Belongs to the ribonucleoside diphosphate reductase small chain family. In terms of assembly, tetramer of two alpha and two beta subunits. The cofactor is Fe cation.

The catalysed reaction is a 2'-deoxyribonucleoside 5'-diphosphate + [thioredoxin]-disulfide + H2O = a ribonucleoside 5'-diphosphate + [thioredoxin]-dithiol. Functionally, provides the precursors necessary for DNA synthesis. Catalyzes the biosynthesis of deoxyribonucleotides from the corresponding ribonucleotides. This is Ribonucleoside-diphosphate reductase subunit beta (nrdF) from Mycoplasmoides gallisepticum (strain R(low / passage 15 / clone 2)) (Mycoplasma gallisepticum).